The primary structure comprises 272 residues: Short-chain dehydrogenase reductase ATA1 (272 aa).

Residue 14 to 38 coordinates NADP(+); that stretch reads IITGGARGIGAATARLFTENGAYVI. Serine 143 provides a ligand contact to substrate. The Proton acceptor role is filled by tyrosine 156. Residue lysine 160 coordinates NADP(+).

This sequence belongs to the short-chain dehydrogenases/reductases (SDR) family. In terms of tissue distribution, expressed specifically in tapetal cells.

May play a role in tapetum development. The protein is Short-chain dehydrogenase reductase ATA1 of Arabidopsis thaliana (Mouse-ear cress).